We begin with the raw amino-acid sequence, 606 residues long: Ectonucleoside triphosphate diphosphohydrolase 7 (606 aa).

Residues 1 to 28 (MARISFSYLCPASWYFTVPTVSPFLRQR) are Cytoplasmic-facing. Residues 29 to 49 (VAFLGLFFIPCVLLLLLIMDL) traverse the membrane as a helical segment. The Vesicular segment spans residues 50–548 (RHWATSLPRD…PAHGSWLRLS (499 aa)). Catalysis depends on glutamate 217, which acts as the Proton acceptor. N-linked (GlcNAc...) asparagine glycosylation occurs at asparagine 330. A disulfide bridge links cysteine 448 with cysteine 477. Residues 549 to 569 (FVYNHYLFFACTLVVLLAIVL) traverse the membrane as a helical segment. Topologically, residues 570–606 (YLLRIHRIHRRQTRASAPLDLLWIEQVVPMIGVQVGP) are cytoplasmic.

This sequence belongs to the GDA1/CD39 NTPase family. It depends on Ca(2+) as a cofactor. The cofactor is Mg(2+). Widely expressed. Expressed at high level in brain, kidney, liver, testis and small intestin. Weakly expressed in lung, thymus and heart.

It is found in the cytoplasmic vesicle membrane. It carries out the reaction a ribonucleoside 5'-triphosphate + H2O = a ribonucleoside 5'-diphosphate + phosphate + H(+). The enzyme catalyses UTP + H2O = UDP + phosphate + H(+). It catalyses the reaction GTP + H2O = GDP + phosphate + H(+). The catalysed reaction is CTP + H2O = CDP + phosphate + H(+). It carries out the reaction ATP + H2O = ADP + phosphate + H(+). In terms of biological role, catalyzes the hydrolysis of nucleoside triphosphates and diphosphates in a calcium- or magnesium-dependent manner. Preferentially hydrolyzes nucleoside 5'-triphosphates, with substrate preference for UTP &gt; GTP &gt; CTP. Hydrolyzes nucleoside diphosphates only to a minor extent. In contrast to its human ortholog is able to hydrolyze ATP. In the epithelial cells of small intestine controls luminal ATP levels, therefore regulating Th17-cell development. This chain is Ectonucleoside triphosphate diphosphohydrolase 7 (Entpd7), found in Mus musculus (Mouse).